Consider the following 1021-residue polypeptide: Chondroitin sulfate ABC endolyase (1021 aa).

A signal peptide spans 1–24; the sequence is MPIFRFTALAMTLGLLSAPYNAMA. The Na(+) site is built by histidine 43, methionine 70, glutamine 73, and aspartate 211. Residue histidine 501 is the Proton acceptor of the active site. Tyrosine 508 serves as the catalytic Proton donor.

The protein belongs to the polysaccharide lyase 8 family. As to quaternary structure, monomer.

Its subcellular location is the periplasm. The catalysed reaction is Endolytic cleavage of (1-&gt;4)-beta-galactosaminic bonds between N-acetylgalactosamine and either D-glucuronic acid or L-iduronic acid to produce a mixture of Delta(4)-unsaturated oligosaccharides of different sizes that are ultimately degraded to Delta(4)-unsaturated tetra- and disaccharides.. With respect to regulation, is inhibited by Zn(2+), Ni(2+), Fe(2+) and Cu(2+). Endolytic, broad-specificity glycosaminoglycan lyase, which degrades the polysaccharides chondroitin, chondroitin-4-sulfate, chondroitin-6-sulfate, dermatan sulfate and to a lesser extent hyaluronan, by beta-elimination of 1,4-hexosaminidic bond to unsaturated tetrasaccharides and disaccharides. Is not active against keratan sulfate, heparan sulfate, and heparin. Is able to promote functional recovery in the injured central nervous system (CNS), via its role in the disruption of the normal organization of the extracellular matrix (ECM). The sequence is that of Chondroitin sulfate ABC endolyase from Proteus vulgaris.